We begin with the raw amino-acid sequence, 358 residues long: Peptide chain release factor 1 (358 aa).

An N5-methylglutamine modification is found at Gln236.

This sequence belongs to the prokaryotic/mitochondrial release factor family. Post-translationally, methylated by PrmC. Methylation increases the termination efficiency of RF1.

Its subcellular location is the cytoplasm. Peptide chain release factor 1 directs the termination of translation in response to the peptide chain termination codons UAG and UAA. The chain is Peptide chain release factor 1 from Corynebacterium glutamicum (strain ATCC 13032 / DSM 20300 / JCM 1318 / BCRC 11384 / CCUG 27702 / LMG 3730 / NBRC 12168 / NCIMB 10025 / NRRL B-2784 / 534).